The sequence spans 240 residues: MAQEIEKTNNDHLVQSSDPEHPANLIPELCRKFYNWGWVTGTGGGTSIRRGDHIFIAPSGVQKELIQPHNIFVLEFPTPKYPPSDRKYIRKPLELKPSACTPLFLTAFERGAGCCIHTHSQWAVLVTLLVEREKGPDACFEISNIEQIKGIPRGKGKGMLGFFDTLRIPIIENTAFEEDLTESLEKAMDQYPDTYAVLVRRHGIYVWGDDVAKAKTQCESLDYLFQLAVEMHKLGLPWVK.

The span at 1-10 shows a compositional bias: basic and acidic residues; the sequence is MAQEIEKTNN. The tract at residues 1–20 is disordered; that stretch reads MAQEIEKTNNDHLVQSSDPE. Cys100 lines the substrate pocket. Zn(2+) is bound by residues His117 and His119. Glu146 serves as the catalytic Proton donor/acceptor. His202 serves as a coordination point for Zn(2+).

This sequence belongs to the aldolase class II family. MtnB subfamily. Requires Zn(2+) as cofactor.

It localises to the cytoplasm. The enzyme catalyses 5-(methylsulfanyl)-D-ribulose 1-phosphate = 5-methylsulfanyl-2,3-dioxopentyl phosphate + H2O. Its pathway is amino-acid biosynthesis; L-methionine biosynthesis via salvage pathway; L-methionine from S-methyl-5-thio-alpha-D-ribose 1-phosphate: step 2/6. Catalyzes the dehydration of methylthioribulose-1-phosphate (MTRu-1-P) into 2,3-diketo-5-methylthiopentyl-1-phosphate (DK-MTP-1-P). The protein is Methylthioribulose-1-phosphate dehydratase of Aspergillus fumigatus (strain CBS 144.89 / FGSC A1163 / CEA10) (Neosartorya fumigata).